A 125-amino-acid polypeptide reads, in one-letter code: Ribosome maturation factor RimP (125 aa).

This sequence belongs to the RimP family.

It localises to the cytoplasm. In terms of biological role, required for maturation of 30S ribosomal subunits. The chain is Ribosome maturation factor RimP from Rickettsia canadensis (strain McKiel).